A 470-amino-acid polypeptide reads, in one-letter code: 3-isopropylmalate dehydratase large subunit (470 aa).

Cys349, Cys409, and Cys412 together coordinate [4Fe-4S] cluster.

The protein belongs to the aconitase/IPM isomerase family. LeuC type 1 subfamily. Heterodimer of LeuC and LeuD. [4Fe-4S] cluster is required as a cofactor.

The catalysed reaction is (2R,3S)-3-isopropylmalate = (2S)-2-isopropylmalate. The protein operates within amino-acid biosynthesis; L-leucine biosynthesis; L-leucine from 3-methyl-2-oxobutanoate: step 2/4. Functionally, catalyzes the isomerization between 2-isopropylmalate and 3-isopropylmalate, via the formation of 2-isopropylmaleate. The sequence is that of 3-isopropylmalate dehydratase large subunit from Afipia carboxidovorans (strain ATCC 49405 / DSM 1227 / KCTC 32145 / OM5) (Oligotropha carboxidovorans).